The primary structure comprises 602 residues: Transcription factor COE4 (602 aa).

The segment at 64-67 (RKSN) is interaction with DNA. The segment at 152-171 (CRVLLTHEIMCSRCCDRKSC) adopts a C5-type zinc-finger fold. Interaction with DNA regions lie at residues 198–205 (NCLKNAGN) and 237–240 (NNSK). The IPT/TIG domain occupies 256–338 (PCIKAISPGE…CKGCPGRFVY (83 aa)). Disordered stretches follow at residues 448 to 476 (PEPGYARSCSSASPRGFAPSPGSQQSGYG) and 558 to 602 (PVLR…LAYS). Pro residues predominate over residues 560–569 (LRPPSSPPQA).

The protein belongs to the COE family. Forms either a homodimer or a heterodimer with a related family member. Interacts with MAPK3/ERK1. Interacts with STAT5A. In terms of tissue distribution, most highly expressed in cytotoxic NK cells, especially CD16(+) NK cells, followed by CD8(+) T-cells.

It localises to the nucleus. Functionally, transcription factor. Binds to specific sequence motif 5'-CCCNNG[GA]G-3' in regulatory elements of putative target immunoregulatory genes such as NKG7, GZMA, and TBX21. Positively modulates transcription of NKG7. May play a role in regulating FAS/CD95-mediated apoptosis in cytotoxic NK cells and T-cells, probably downstream of interleukin IL2 signaling. The chain is Transcription factor COE4 (EBF4) from Homo sapiens (Human).